The following is a 570-amino-acid chain: MSFGVPHSGGSRRSKWDQAGPDADAGSAPTGALDAAAAVAAKINAMLVAKGKLKPSQISSAAPVDKAAGAGGNKLKDDLVVAEVEINDVPLTCRNLLTRGQTQDEISRVSGAAVSTRGRFMTVEEKSKALPSDRPLYLHVQGQTRDLVDKAVNRIKEIITNGVVKAATNSTYSGATVTVYQQSGPSVPTIPSAPHKPHYPGGMHYVQDKVFVGLDQALQGFNVKERVEGPSCSFLQHIQAETGAKVFLRGKGSGCLEPASGREAFEPMYIYISHPKPEGLASAKTLCENLLQTVHAEYSRYLNQMSSMMPTQGFIHPPVVNGLPPQPPYYSPAGFQPSYPAPVPPPPPPIAPQYPVAPVAPAPVPPPNAQYPITPVPAHVPTQTLLPAAFPPTAPVPPKLTAPPNPPQKRRFTEEVDEMDRGLLGYQHGPIHMTNLGAGMPVGSSETSGPPSAASSVPVRERDSSRQLMPPPCAPALLKPLRPLKADESPSAPSLLEPQVKRMRTGLVAYAGDSSDEEEDHGPSRAAVTAAGNPGAGWNPYRCPPSPPHRPKTQTAPQPTQQNMPFWMAP.

The tract at residues 1–29 (MSFGVPHSGGSRRSKWDQAGPDADAGSAP) is disordered. KH domains lie at 77-157 (DDLV…RIKE) and 210-292 (VFVG…NLLQ). A compositionally biased stretch (pro residues) spans 391-407 (PPTAPVPPKLTAPPNPP). Disordered regions lie at residues 391–410 (PPTA…PQKR), 438–500 (AGMP…EPQV), and 512–570 (GDSS…WMAP). A required for nuclear retention region spans residues 427–497 (QHGPIHMTNL…ESPSAPSLLE (71 aa)). Over residues 553–562 (TQTAPQPTQQ) the composition is skewed to low complexity.

Belongs to the KHDC4 family. As to quaternary structure, interacts with PRPF19.

It localises to the nucleus. It is found in the cytoplasm. Functionally, RNA-binding protein involved in pre-mRNA splicing. Interacts with the PRP19C/Prp19 complex/NTC/Nineteen complex which is part of the spliceosome. Involved in regulating splice site selection. Binds preferentially RNA with A/C rich sequences and poly-C stretches. The polypeptide is KH homology domain-containing protein 4 (khdc4) (Danio rerio (Zebrafish)).